Here is a 426-residue protein sequence, read N- to C-terminus: MDENIIINILRKEMMPGLGVTEPASIALSSAKAYEVIGGEIKNIKIIADPGLFKNAFSCAIPGTKEVGNEMAALLGAICGDASLGLECLRKIKKEDVSKAKTMLDKIDIEIKSQTEGLYVESIVTTNNGIGRTIIRYKHDNIVLVEKNNKILYQKENTLNKSNNFSQEAIDSKKITEMKLDEIVEFVNNVNYEKIEFLLESIKMNKKLSEKGLEGLGIGLGKLILESCNENNYELYAEALTCSAIDARVSGATVPAMTVTGSGNHGIITTLPLLAIKEKKNLNNEVLARSIALSYIINIYIKEFSGKLSAFCGCAVAAGTGVSAGICYLLGGSLKEIENTIKNMASNITGMICTGGNLACSLKANTGVKAAFLSAKMALNNIVIPNKCGIVSNSIEDTMKNIGRIAYPGMMETDKEILNIMIESSK.

It belongs to the UPF0597 family.

The sequence is that of UPF0597 protein CLD_2825 from Clostridium botulinum (strain Okra / Type B1).